Reading from the N-terminus, the 163-residue chain is SsrA-binding protein (163 aa).

This sequence belongs to the SmpB family.

The protein resides in the cytoplasm. Required for rescue of stalled ribosomes mediated by trans-translation. Binds to transfer-messenger RNA (tmRNA), required for stable association of tmRNA with ribosomes. tmRNA and SmpB together mimic tRNA shape, replacing the anticodon stem-loop with SmpB. tmRNA is encoded by the ssrA gene; the 2 termini fold to resemble tRNA(Ala) and it encodes a 'tag peptide', a short internal open reading frame. During trans-translation Ala-aminoacylated tmRNA acts like a tRNA, entering the A-site of stalled ribosomes, displacing the stalled mRNA. The ribosome then switches to translate the ORF on the tmRNA; the nascent peptide is terminated with the 'tag peptide' encoded by the tmRNA and targeted for degradation. The ribosome is freed to recommence translation, which seems to be the essential function of trans-translation. The polypeptide is SsrA-binding protein (Shewanella baltica (strain OS223)).